We begin with the raw amino-acid sequence, 122 residues long: Holo-[acyl-carrier-protein] synthase (122 aa).

Mg(2+) is bound by residues Asp8 and Glu56.

Belongs to the P-Pant transferase superfamily. AcpS family. Mg(2+) serves as cofactor.

The protein resides in the cytoplasm. It catalyses the reaction apo-[ACP] + CoA = holo-[ACP] + adenosine 3',5'-bisphosphate + H(+). Its function is as follows. Transfers the 4'-phosphopantetheine moiety from coenzyme A to a Ser of acyl-carrier-protein. The sequence is that of Holo-[acyl-carrier-protein] synthase from Alkaliphilus oremlandii (strain OhILAs) (Clostridium oremlandii (strain OhILAs)).